The sequence spans 191 residues: UPF0312 protein Shewmr4_1178 (191 aa).

Residues methionine 1–alanine 22 form the signal peptide.

The protein belongs to the UPF0312 family. Type 1 subfamily.

Its subcellular location is the periplasm. This is UPF0312 protein Shewmr4_1178 from Shewanella sp. (strain MR-4).